We begin with the raw amino-acid sequence, 340 residues long: Deubiquitinase SseL (340 aa).

Residue H223 is part of the active site. C285 (nucleophile) is an active-site residue.

It belongs to the peptidase C79 family.

The protein localises to the secreted. Its subcellular location is the host cytoplasm. In terms of biological role, effector proteins function to alter host cell physiology and promote bacterial survival in host tissues. This protease targets the host cell ubiquitin pathway by acting as a deubiquitinase in infected host cells. Specifically hydrolyzes mono- and polyubiquitin substrates in vitro with a preference for 'Lys-63'-linked ubiquitin chains, suggesting that it interferes with a signaling pathway rather than inhibiting proteasomal-dependent degradation of its targets. Does not possess desumoylating activity. Is required for the Salmonella-induced delayed cytotoxicity in macrophages and full virulence. Is not required for intracellular bacterial replication. This Salmonella typhimurium (strain LT2 / SGSC1412 / ATCC 700720) protein is Deubiquitinase SseL (sseL).